Reading from the N-terminus, the 111-residue chain is Cytochrome b-c1 complex subunit 7 (111 aa).

An N-acetylalanine modification is found at alanine 2. Lysine 19 is subject to N6-acetyllysine. Residue lysine 78 is modified to N6-acetyllysine; alternate. Lysine 78 carries the N6-succinyllysine; alternate modification. At lysine 83 the chain carries N6-acetyllysine. At lysine 88 the chain carries N6-acetyllysine; alternate. The residue at position 88 (lysine 88) is an N6-succinyllysine; alternate. N6-acetyllysine is present on lysine 96.

It belongs to the UQCRB/QCR7 family. In terms of assembly, component of the ubiquinol-cytochrome c oxidoreductase (cytochrome b-c1 complex, complex III, CIII), a multisubunit enzyme composed of 11 subunits. The complex is composed of 3 respiratory subunits cytochrome b, cytochrome c1 and Rieske protein UQCRFS1, 2 core protein subunits UQCRC1/QCR1 and UQCRC2/QCR2, and 6 low-molecular weight protein subunits UQCRH/QCR6, UQCRB/QCR7, UQCRQ/QCR8, UQCR10/QCR9, UQCR11/QCR10 and subunit 9, the cleavage product of Rieske protein UQCRFS1. The complex exists as an obligatory dimer and forms supercomplexes (SCs) in the inner mitochondrial membrane with NADH-ubiquinone oxidoreductase (complex I, CI) and cytochrome c oxidase (complex IV, CIV), resulting in different assemblies (supercomplex SCI(1)III(2)IV(1) and megacomplex MCI(2)III(2)IV(2)).

Its subcellular location is the mitochondrion inner membrane. Functionally, component of the ubiquinol-cytochrome c oxidoreductase, a multisubunit transmembrane complex that is part of the mitochondrial electron transport chain which drives oxidative phosphorylation. The respiratory chain contains 3 multisubunit complexes succinate dehydrogenase (complex II, CII), ubiquinol-cytochrome c oxidoreductase (cytochrome b-c1 complex, complex III, CIII) and cytochrome c oxidase (complex IV, CIV), that cooperate to transfer electrons derived from NADH and succinate to molecular oxygen, creating an electrochemical gradient over the inner membrane that drives transmembrane transport and the ATP synthase. The cytochrome b-c1 complex catalyzes electron transfer from ubiquinol to cytochrome c, linking this redox reaction to translocation of protons across the mitochondrial inner membrane, with protons being carried across the membrane as hydrogens on the quinol. In the process called Q cycle, 2 protons are consumed from the matrix, 4 protons are released into the intermembrane space and 2 electrons are passed to cytochrome c. The chain is Cytochrome b-c1 complex subunit 7 (UQCRB) from Bos taurus (Bovine).